Consider the following 883-residue polypeptide: MAAKIGEIVQVHNDNPVKRVPIARPSFGREGKQIKLLSNHFTVKLSGIDAVFYQYSVSIKSEDDKVIDGKGIGRKVMDKVLQTYSSELAGKEFAYDGEKCLFTVGPLPQNNFEFTVILEETSSRAAGGSLGHGSPNQGDKKRSKCTHLAKKIVVGISYAAKIPLKSVALALQGSESDHAQDALRVLDIVLRQQQAKRGCLLVRQSFFSDDFRNLVDLTGGVSGCRGLHSSFRTTIGGLSLNMDVSTTMIVTPGPVFDFLLTNQNVRDIRDIDWPRAKKMLKNLRVKAIHNNMEFKIIGLSDEPCSRQTFPMKVRNGSSEGETVEITVQEYFKSKQVDLTMPYLPCLDVGKPKRPNYVPIELCHMVSLQRYTKALSSQQRATLVEKSRQKPQERMRVVTDAVKNNRYDDDPILSSCGIKIEKQLTRVDGRVLSAPTLVVGNSEDCIPNRGRWNYNNKRLFEPVKIERWAIVNFSARCDMSRISRDLINCGRTKGIIIERPFTLVDEDSQSRRCTPVVRVESMFEKVKANLPGPPEFLLCVLPERKNCDLYGPWKKKNLHEMGIITQCIVPSVKMNDQYYTNVLLKINAKLGGMNSKLSLEHRHMIPIVNQTPTLILGMDVSHGSPGRADVPSIAAVVGSRCWPLISRYRASVRTQSPKVEMIDSLFKPLDDGKDDGIIRELLLDFYKTSQQRKPKQIIIFRDGVSESQFSQVLNVELNQIIKAYQYMDQGPIPKFTVIIAQKNHHTKLFQENTPDNVPPGTVVDSGIVHPRQYDFYMYAHAGPIGTSRPTHYHVLLDEIGFLPDDVQKLVLSLSYVYQRSTTAISVVAPICYAHLAAAQMGQFMKFEEFAETSSGSGGVPSSSGAVVPELPRLHADVCSSMFFC.

A PAZ domain is found at 254-366 (PVFDFLLTNQ…VPIELCHMVS (113 aa)). The 310-residue stretch at 535–844 (FLLCVLPERK…AAAQMGQFMK (310 aa)) folds into the Piwi domain.

It belongs to the argonaute family. Ago subfamily.

In terms of biological role, probably involved in the RNA silencing pathway. May bind to short RNAs such as microRNAs (miRNAs) or short interfering RNAs (siRNAs), and represses the translation of mRNAs which are complementary to them. The chain is Protein argonaute 16 (AGO16) from Oryza sativa subsp. japonica (Rice).